The primary structure comprises 161 residues: Endoribonuclease YbeY (161 aa).

Positions 120, 124, and 130 each coordinate Zn(2+).

It belongs to the endoribonuclease YbeY family. The cofactor is Zn(2+).

It is found in the cytoplasm. Single strand-specific metallo-endoribonuclease involved in late-stage 70S ribosome quality control and in maturation of the 3' terminus of the 16S rRNA. This is Endoribonuclease YbeY from Erythrobacter litoralis (strain HTCC2594).